The sequence spans 253 residues: LexA repressor (253 aa).

The interval 1-34 (MAIEKKPAGARGSRGSRTVKTLPNGKPDPASLSD) is disordered. Residues 56–76 (IREIGDAAGLQSTSSVAYQLK) constitute a DNA-binding region (H-T-H motif). Residues 82–106 (GFLRRDPNKPRAVDVRHLPETESRS) show a composition bias toward basic and acidic residues. A disordered region spans residues 82-127 (GFLRRDPNKPRAVDVRHLPETESRSSKAATQAKSKAPQAGAHDPEL). A compositionally biased stretch (low complexity) spans 107–120 (SKAATQAKSKAPQA). Catalysis depends on for autocatalytic cleavage activity residues Ser-177 and Lys-214.

It belongs to the peptidase S24 family. In terms of assembly, homodimer.

The catalysed reaction is Hydrolysis of Ala-|-Gly bond in repressor LexA.. Represses a number of genes involved in the response to DNA damage (SOS response), including recA and lexA. In the presence of single-stranded DNA, RecA interacts with LexA causing an autocatalytic cleavage which disrupts the DNA-binding part of LexA, leading to derepression of the SOS regulon and eventually DNA repair. The chain is LexA repressor from Corynebacterium glutamicum (strain R).